We begin with the raw amino-acid sequence, 597 residues long: uncharacterized protein (597 aa).

2 helical membrane-spanning segments follow: residues 4-23 (LLLA…FKIV) and 209-231 (FVSV…GIAI).

It localises to the cell membrane. This is an uncharacterized protein from Archaeoglobus fulgidus (strain ATCC 49558 / DSM 4304 / JCM 9628 / NBRC 100126 / VC-16).